The primary structure comprises 209 residues: Thiamine-phosphate synthase (209 aa).

Residues glutamine 38–lysine 42 and asparagine 70 contribute to the 4-amino-2-methyl-5-(diphosphooxymethyl)pyrimidine site. Residues aspartate 71 and aspartate 90 each contribute to the Mg(2+) site. Serine 109 is a binding site for 4-amino-2-methyl-5-(diphosphooxymethyl)pyrimidine. Residue threonine 135–threonine 137 coordinates 2-[(2R,5Z)-2-carboxy-4-methylthiazol-5(2H)-ylidene]ethyl phosphate. Lysine 138 is a 4-amino-2-methyl-5-(diphosphooxymethyl)pyrimidine binding site. Residues glycine 165 and valine 185–serine 186 contribute to the 2-[(2R,5Z)-2-carboxy-4-methylthiazol-5(2H)-ylidene]ethyl phosphate site.

Belongs to the thiamine-phosphate synthase family. It depends on Mg(2+) as a cofactor.

It carries out the reaction 2-[(2R,5Z)-2-carboxy-4-methylthiazol-5(2H)-ylidene]ethyl phosphate + 4-amino-2-methyl-5-(diphosphooxymethyl)pyrimidine + 2 H(+) = thiamine phosphate + CO2 + diphosphate. It catalyses the reaction 2-(2-carboxy-4-methylthiazol-5-yl)ethyl phosphate + 4-amino-2-methyl-5-(diphosphooxymethyl)pyrimidine + 2 H(+) = thiamine phosphate + CO2 + diphosphate. The catalysed reaction is 4-methyl-5-(2-phosphooxyethyl)-thiazole + 4-amino-2-methyl-5-(diphosphooxymethyl)pyrimidine + H(+) = thiamine phosphate + diphosphate. It participates in cofactor biosynthesis; thiamine diphosphate biosynthesis; thiamine phosphate from 4-amino-2-methyl-5-diphosphomethylpyrimidine and 4-methyl-5-(2-phosphoethyl)-thiazole: step 1/1. Condenses 4-methyl-5-(beta-hydroxyethyl)thiazole monophosphate (THZ-P) and 2-methyl-4-amino-5-hydroxymethyl pyrimidine pyrophosphate (HMP-PP) to form thiamine monophosphate (TMP). The chain is Thiamine-phosphate synthase from Persephonella marina (strain DSM 14350 / EX-H1).